Reading from the N-terminus, the 152-residue chain is SsrA-binding protein (152 aa).

This sequence belongs to the SmpB family.

Its subcellular location is the cytoplasm. Functionally, required for rescue of stalled ribosomes mediated by trans-translation. Binds to transfer-messenger RNA (tmRNA), required for stable association of tmRNA with ribosomes. tmRNA and SmpB together mimic tRNA shape, replacing the anticodon stem-loop with SmpB. tmRNA is encoded by the ssrA gene; the 2 termini fold to resemble tRNA(Ala) and it encodes a 'tag peptide', a short internal open reading frame. During trans-translation Ala-aminoacylated tmRNA acts like a tRNA, entering the A-site of stalled ribosomes, displacing the stalled mRNA. The ribosome then switches to translate the ORF on the tmRNA; the nascent peptide is terminated with the 'tag peptide' encoded by the tmRNA and targeted for degradation. The ribosome is freed to recommence translation, which seems to be the essential function of trans-translation. This is SsrA-binding protein from Rickettsia typhi (strain ATCC VR-144 / Wilmington).